We begin with the raw amino-acid sequence, 735 residues long: MATTKFPKFSQGLANDPTTRRIWFGIATAHDFENHDGMTEENLYQKIFASHFGQLAIIFLWTSGNLFHVAWQGNFEQWVQSPLNVRPIAHAIWDPHFGQPAVEAFTRGGASGPVNISTSGVYQWWYTIGMRTNQDLYIGSIFLSFAATAFLFAGWLHLQPKFQPGLSWFKNAESRLNHHLSGLFGVSSLAWTGHLIHVAIPEARGQHVRWDNFLTTLPHPQGLTPFFTGNWAAYAENPDTASHLFGTSEGSGTAILTFLGGFHPQTQSLWLSDMAHHHLAIAVLFIVAGHMYRTNFGIGHSMREILEAHKAPSGNLGNGHTGLFDTVNNSLHFQLGLALASVGTICSLVAQHMYSLPPYAFLAQDFTTQASLYTHHQYIAGFILCGAFAHGAIFFIRDYDPEANKGNVLARMLEHKEAIISHLSWVSLFLGFHTLGLYVHNDVMQAFGTPEKQILIEPVFAQWIQASHGKTAYGFDLLLSQSTSNAYAAGQSLWLPGWLEAINNNNNSLFLTIGPGDFLVHHAIALGLHTTTLILVKGALDARGSKLMPDKKDFGYSFPCDGPGRGGTCDISAWDAFYLAVFWMLNTIGWVTFYFHWKHLGIWQGNVSQFNESSTYLMGWLRDYLWLNSSQLINGYNPFGMNSLSVWSWMFLFGHLIYATGFMFLISWRGYWQELIETLVWAHERTPIADLIRWKDKPVALSIVQARVVGLAHFSAGYILTYAAFLIASTSAKFG.

Transmembrane regions (helical) follow at residues 47–70 (IFASHFGQLAIIFLWTSGNLFHVA), 136–159 (LYIGSIFLSFAATAFLFAGWLHLQ), 176–200 (LNHHLSGLFGVSSLAWTGHLIHVAI), 274–292 (MAHHHLAIAVLFIVAGHMY), 331–354 (LHFQLGLALASVGTICSLVAQHMY), 370–396 (ASLYTHHQYIAGFILCGAFAHGAIFFI), 418–440 (AIISHLSWVSLFLGFHTLGLYVH), and 518–536 (FLVHHAIALGLHTTTLILV). The [4Fe-4S] cluster site is built by Cys560 and Cys569. 2 helical membrane passes run 576-597 (AFYLAVFWMLNTIGWVTFYFHW) and 644-666 (LSVWSWMFLFGHLIYATGFMFLI). The chlorophyll a site is built by His655, Met663, and Tyr671. Trp672 provides a ligand contact to phylloquinone. Residues 708–728 (VVGLAHFSAGYILTYAAFLIA) traverse the membrane as a helical segment.

Belongs to the PsaA/PsaB family. As to quaternary structure, the PsaA/B heterodimer binds the P700 chlorophyll special pair and subsequent electron acceptors. PSI consists of a core antenna complex that captures photons, and an electron transfer chain that converts photonic excitation into a charge separation. The eukaryotic PSI reaction center is composed of at least 11 subunits. Requires P700 is a chlorophyll a/chlorophyll a' dimer, A0 is one or more chlorophyll a, A1 is one or both phylloquinones and FX is a shared 4Fe-4S iron-sulfur center. as cofactor.

Its subcellular location is the plastid. The protein localises to the chloroplast thylakoid membrane. It catalyses the reaction reduced [plastocyanin] + hnu + oxidized [2Fe-2S]-[ferredoxin] = oxidized [plastocyanin] + reduced [2Fe-2S]-[ferredoxin]. PsaA and PsaB bind P700, the primary electron donor of photosystem I (PSI), as well as the electron acceptors A0, A1 and FX. PSI is a plastocyanin/cytochrome c6-ferredoxin oxidoreductase, converting photonic excitation into a charge separation, which transfers an electron from the donor P700 chlorophyll pair to the spectroscopically characterized acceptors A0, A1, FX, FA and FB in turn. Oxidized P700 is reduced on the lumenal side of the thylakoid membrane by plastocyanin or cytochrome c6. This Tupiella akineta (Green alga) protein is Photosystem I P700 chlorophyll a apoprotein A2.